Consider the following 303-residue polypeptide: Glutathione transport system permease protein GsiD (303 aa).

6 helical membrane passes run 40 to 60 (AMTA…ARWI), 105 to 125 (LAAG…LGLL), 144 to 164 (LFAF…GSGI), 165 to 185 (ANVI…LVRG), 222 to 242 (IVVF…SLSF), and 266 to 286 (VIAP…VLAF). The 190-residue stretch at 101–290 (AQISLAAGVF…LTVLAFNLLG (190 aa)) folds into the ABC transmembrane type-1 domain.

This sequence belongs to the binding-protein-dependent transport system permease family. As to quaternary structure, the complex is composed of two ATP-binding proteins (GsiA), two transmembrane proteins (GsiC and GsiD) and a solute-binding protein (GsiB).

Its subcellular location is the cell inner membrane. Its function is as follows. Part of the ABC transporter complex GsiABCD involved in glutathione import. Probably responsible for the translocation of the substrate across the membrane. This is Glutathione transport system permease protein GsiD from Shigella flexneri serotype 5b (strain 8401).